Here is a 203-residue protein sequence, read N- to C-terminus: Guanylate kinase (203 aa).

The 179-residue stretch at 3–181 (GTLYVVSAPS…TLADLQAIFT (179 aa)) folds into the Guanylate kinase-like domain. Position 10-17 (10-17 (APSGAGKT)) interacts with ATP.

Belongs to the guanylate kinase family.

It is found in the cytoplasm. It carries out the reaction GMP + ATP = GDP + ADP. Essential for recycling GMP and indirectly, cGMP. The sequence is that of Guanylate kinase from Alkalilimnicola ehrlichii (strain ATCC BAA-1101 / DSM 17681 / MLHE-1).